We begin with the raw amino-acid sequence, 210 residues long: MKIPPVSIRYLRSILELKDAPPDQGCEVAFAGRSNAGKSSAINTLANVGGLARVSKTPGRTRMINFFSIDDGRRLVDLPGYGYAKVPGEIHRRWEAALEQYLRYRQSLRGVFLLMDVRHPFTEMDEVMIEWCAHRSIALHVALTKSDKLSRGAAMNARLMAKTRLAGYGSPDFSVQLFSSLKKSGTEEAWEVLGRWLDLPREDQEKTPGA.

The EngB-type G domain occupies 24–199 (QGCEVAFAGR…WEVLGRWLDL (176 aa)). Residues 32–39 (GRSNAGKS), 59–63 (GRTRM), 77–80 (DLPG), 144–147 (TKSD), and 178–180 (FSS) each bind GTP. Serine 39 and threonine 61 together coordinate Mg(2+).

It belongs to the TRAFAC class TrmE-Era-EngA-EngB-Septin-like GTPase superfamily. EngB GTPase family. Mg(2+) is required as a cofactor.

Functionally, necessary for normal cell division and for the maintenance of normal septation. In Methylococcus capsulatus (strain ATCC 33009 / NCIMB 11132 / Bath), this protein is Probable GTP-binding protein EngB.